A 245-amino-acid chain; its full sequence is tRNA (guanine-N(1)-)-methyltransferase (245 aa).

Residues Gly-111 and 130–135 (IGDYVL) contribute to the S-adenosyl-L-methionine site.

This sequence belongs to the RNA methyltransferase TrmD family. As to quaternary structure, homodimer.

It localises to the cytoplasm. It carries out the reaction guanosine(37) in tRNA + S-adenosyl-L-methionine = N(1)-methylguanosine(37) in tRNA + S-adenosyl-L-homocysteine + H(+). In terms of biological role, specifically methylates guanosine-37 in various tRNAs. The protein is tRNA (guanine-N(1)-)-methyltransferase of Dictyoglomus turgidum (strain DSM 6724 / Z-1310).